Consider the following 485-residue polypeptide: MTITPQNLIALLPLLIVGLTVVVVMLSIAWRRNHFLNATLSVIGLNAALVSLWFVGQAGAMDVTPLMRVDGFAMLYTGLVLLASLATCTFAYPWLEGYNDNKDEFYLLVLIAALGGILLANANHLASLFLGIELISLPLFGLVGYAFRQKRSLEASIKYTILSAAASSFLLFGMALVYAQSGDLSFVALGKNLGDGMLNEPLLLAGFGLMIVGLGFKLSLVPFHLWTPDVYQGAPAPVSTFLATASKIAIFGVVMRLFLYAPMGDSEAIRVVLAIIAFASIIFGNLMALSQTNIKRLLGYSSISHLGYLLVALIALQTGEMSMEAVGVYLAGYLFSSLGAFGVVSLMSSPYRGPDADSLYSYRGLFWHRPILAAVMTVMMLSLAGIPMTLGFIGKFYVLAVGVQAHLWWLVGAVVVGSASGLYYYLRVAVSLYLHAPEQPGRDAPSNWQYSAGGIVVLISALLVLVLGVWPQPLISIVRLAMPLM.

The next 14 membrane-spanning stretches (helical) occupy residues 8 to 28, 35 to 55, 71 to 91, 105 to 125, 127 to 147, 159 to 179, 203 to 223, 235 to 255, 271 to 291, 297 to 317, 326 to 346, 373 to 393, 408 to 430, and 455 to 475; these read LIALLPLLIVGLTVVVVMLSI, FLNATLSVIGLNAALVSLWFV, GFAMLYTGLVLLASLATCTFA, FYLLVLIAALGGILLANANHL, SLFLGIELISLPLFGLVGYAF, YTILSAAASSFLLFGMALVYA, LLAGFGLMIVGLGFKLSLVPF, PAPVSTFLATASKIAIFGVVM, VVLAIIAFASIIFGNLMALSQ, LLGYSSISHLGYLLVALIALQ, VGVYLAGYLFSSLGAFGVVSL, AAVMTVMMLSLAGIPMTLGFI, WWLVGAVVVGSASGLYYYLRVAV, and IVVLISALLVLVLGVWPQPLI.

The protein belongs to the complex I subunit 2 family. NDH-1 is composed of 13 different subunits. Subunits NuoA, H, J, K, L, M, N constitute the membrane sector of the complex.

The protein localises to the cell inner membrane. The enzyme catalyses a quinone + NADH + 5 H(+)(in) = a quinol + NAD(+) + 4 H(+)(out). Its function is as follows. NDH-1 shuttles electrons from NADH, via FMN and iron-sulfur (Fe-S) centers, to quinones in the respiratory chain. The immediate electron acceptor for the enzyme in this species is believed to be ubiquinone. Couples the redox reaction to proton translocation (for every two electrons transferred, four hydrogen ions are translocated across the cytoplasmic membrane), and thus conserves the redox energy in a proton gradient. The chain is NADH-quinone oxidoreductase subunit N from Shigella sonnei (strain Ss046).